The following is a 334-amino-acid chain: Glycerol-1-phosphate dehydrogenase [NAD(P)+] (334 aa).

NAD(+) is bound by residues 77 to 81 (GRPID) and 99 to 102 (TTAS). Asp104 is a binding site for substrate. Ser108 contacts NAD(+). Asp147 lines the substrate pocket. The Zn(2+) site is built by Asp147 and His225. His229 lines the substrate pocket. His246 provides a ligand contact to Zn(2+).

This sequence belongs to the glycerol-1-phosphate dehydrogenase family. Zn(2+) is required as a cofactor.

Its subcellular location is the cytoplasm. The catalysed reaction is sn-glycerol 1-phosphate + NAD(+) = dihydroxyacetone phosphate + NADH + H(+). The enzyme catalyses sn-glycerol 1-phosphate + NADP(+) = dihydroxyacetone phosphate + NADPH + H(+). Its pathway is membrane lipid metabolism; glycerophospholipid metabolism. Its function is as follows. Catalyzes the NAD(P)H-dependent reduction of dihydroxyacetonephosphate (DHAP or glycerone phosphate) to glycerol 1-phosphate (G1P). The G1P thus generated is used as the glycerophosphate backbone of phospholipids in the cellular membranes of Archaea. This chain is Glycerol-1-phosphate dehydrogenase [NAD(P)+], found in Methanococcus maripaludis (strain C7 / ATCC BAA-1331).